A 186-amino-acid polypeptide reads, in one-letter code: Interferon beta (186 aa).

A signal peptide spans 1–21 (MTYRWILPMALLLCFSTTALS). Phosphotyrosine is present on tyrosine 24. A disulfide bridge connects residues cysteine 52 and cysteine 161. Asparagine 101 and asparagine 136 each carry an N-linked (GlcNAc...) asparagine glycan.

The protein belongs to the alpha/beta interferon family. As to quaternary structure, monomer.

Its subcellular location is the secreted. Type I interferon cytokine that plays a key role in the innate immune response to infection, developing tumors and other inflammatory stimuli. Signals via binding to high-affinity (IFNAR2) and low-affinity (IFNAR1) heterodimeric receptor, activating the canonical Jak-STAT signaling pathway resulting in transcriptional activation or repression of interferon-regulated genes that encode the effectors of the interferon response, such as antiviral proteins, regulators of cell proliferation and differentiation, and immunoregulatory proteins. Signals mostly via binding to a IFNAR1-IFNAR2 heterodimeric receptor, but can also function with IFNAR1 alone and independently of Jak-STAT pathways. Elicits a wide variety of responses, including antiviral and antibacterial activities, and can regulate the development of B-cells, myelopoiesis and lipopolysaccharide (LPS)-inducible production of tumor necrosis factor. Plays a role in neuronal homeostasis by regulating dopamine turnover and protecting dopaminergic neurons: acts by promoting neuronal autophagy and alpha-synuclein clearance, thereby preventing dopaminergic neuron loss. IFNB1 is more potent than interferon-alpha (IFN-alpha) in inducing the apoptotic and antiproliferative pathways required for control of tumor cell growth. The chain is Interferon beta (IFNB1) from Equus caballus (Horse).